The sequence spans 187 residues: Large ribosomal subunit protein bL25 (187 aa).

This sequence belongs to the bacterial ribosomal protein bL25 family. CTC subfamily. In terms of assembly, part of the 50S ribosomal subunit; part of the 5S rRNA/L5/L18/L25 subcomplex. Contacts the 5S rRNA. Binds to the 5S rRNA independently of L5 and L18.

Its function is as follows. This is one of the proteins that binds to the 5S RNA in the ribosome where it forms part of the central protuberance. The sequence is that of Large ribosomal subunit protein bL25 from Tropheryma whipplei (strain Twist) (Whipple's bacillus).